Reading from the N-terminus, the 73-residue chain is ATP synthase subunit 9, mitochondrial (73 aa).

A run of 2 helical transmembrane segments spans residues Val12–Ile32 and Ile50–Leu70.

Belongs to the ATPase C chain family. F-type ATPases have 2 components, CF(1) - the catalytic core - and CF(0) - the membrane proton channel. CF(1) has five subunits: alpha(3), beta(3), gamma(1), delta(1), epsilon(1). CF(0) has three main subunits: a, b and c.

The protein localises to the mitochondrion inner membrane. Mitochondrial membrane ATP synthase (F(1)F(0) ATP synthase or Complex V) produces ATP from ADP in the presence of a proton gradient across the membrane which is generated by electron transport complexes of the respiratory chain. F-type ATPases consist of two structural domains, F(1) - containing the extramembraneous catalytic core and F(0) - containing the membrane proton channel, linked together by a central stalk and a peripheral stalk. During catalysis, ATP synthesis in the catalytic domain of F(1) is coupled via a rotary mechanism of the central stalk subunits to proton translocation. Part of the complex F(0) domain. A homomeric c-ring of probably 10 subunits is part of the complex rotary element. The sequence is that of ATP synthase subunit 9, mitochondrial (ATP9) from Mycosarcoma maydis (Corn smut fungus).